The following is a 544-amino-acid chain: Chaperonin GroEL (544 aa).

ATP-binding positions include 29–32 (TLGP), 86–90 (DGTTT), Gly-413, 476–478 (NAA), and Asp-492.

It belongs to the chaperonin (HSP60) family. In terms of assembly, forms a cylinder of 14 subunits composed of two heptameric rings stacked back-to-back. Interacts with the co-chaperonin GroES.

The protein resides in the cytoplasm. The catalysed reaction is ATP + H2O + a folded polypeptide = ADP + phosphate + an unfolded polypeptide.. Together with its co-chaperonin GroES, plays an essential role in assisting protein folding. The GroEL-GroES system forms a nano-cage that allows encapsulation of the non-native substrate proteins and provides a physical environment optimized to promote and accelerate protein folding. In Bacillus cereus (strain G9842), this protein is Chaperonin GroEL.